Consider the following 203-residue polypeptide: SOSS complex subunit B1-A (203 aa).

Positions 22 to 92 form a DNA-binding region, OB; it reads IVLETGRVTK…TLYTGRGGDL (71 aa). The disordered stretch occupies residues 110 to 203; the sequence is EPNPEYIAQQ…GKESRRTGKR (94 aa). A compositionally biased stretch (low complexity) spans 118–140; sequence QQSQSKQGQQESGTGTNNHNSSS. Residues 149–182 show a composition bias toward polar residues; that stretch reads ENGNGSNSSGPPAHQSTAPAHSASGRITRSQPNH.

The protein belongs to the SOSS-B family. SOSS-B1 subfamily. In terms of assembly, component of the SOSS complex, composed of soss-b (soss-b1/nabp2 or soss-b2/nabp1), soss-a/ints3 and soss-c/inip. SOSS complexes containing soss-b1/nabp2 are more abundant than complexes containing soss-b2/nabp1.

It localises to the nucleus. Functionally, component of the SOSS complex, a multiprotein complex that functions downstream of the MRN complex to promote DNA repair and G2/M checkpoint. In the SOSS complex, acts as a sensor of single-stranded DNA that binds to single-stranded DNA. The SOSS complex associates with DNA lesions and influences diverse endpoints in the cellular DNA damage response including cell-cycle checkpoint activation, recombinational repair and maintenance of genomic stability. Required for efficient homologous recombination-dependent repair of double-strand breaks (DSBs). The polypeptide is SOSS complex subunit B1-A (nabp2-a) (Xenopus laevis (African clawed frog)).